Here is a 448-residue protein sequence, read N- to C-terminus: tRNA modification GTPase MnmE (448 aa).

3 residues coordinate (6S)-5-formyl-5,6,7,8-tetrahydrofolate: Arg-25, Glu-82, and Lys-121. A TrmE-type G domain is found at 217–372 (GLTTVIAGRP…LRQEIIRRAG (156 aa)). K(+) is bound at residue Asn-227. GTP is bound by residues 227–232 (NVGKSS), 246–252 (TEIPGTT), 271–274 (DTAG), and 353–355 (SAR). Ser-231 is a binding site for Mg(2+). Residues Thr-246, Ile-248, and Thr-251 each contribute to the K(+) site. Residue Thr-252 coordinates Mg(2+). A (6S)-5-formyl-5,6,7,8-tetrahydrofolate-binding site is contributed by Lys-448.

The protein belongs to the TRAFAC class TrmE-Era-EngA-EngB-Septin-like GTPase superfamily. TrmE GTPase family. Homodimer. Heterotetramer of two MnmE and two MnmG subunits. K(+) is required as a cofactor.

Its subcellular location is the cytoplasm. In terms of biological role, exhibits a very high intrinsic GTPase hydrolysis rate. Involved in the addition of a carboxymethylaminomethyl (cmnm) group at the wobble position (U34) of certain tRNAs, forming tRNA-cmnm(5)s(2)U34. The chain is tRNA modification GTPase MnmE from Methylococcus capsulatus (strain ATCC 33009 / NCIMB 11132 / Bath).